The primary structure comprises 368 residues: MEKRDYYEVLGLTKDEIKKAYRKLSKQYHPDLNKEPGADEKFKEIAEAYEVLSDDQKKARYDQFGHEDPNAGFGGGFGGGGFGGFEDIFSSFFGGGGRRQDPNAPRKGDDLQYRMNIKFEEAIFGKETEIEIPKDETCETCHGSGAKPGTQPETCSTCNGAGQINQAVDTPFGRMMNRRSCTTCHGTGKIIKEKCSTCRGEGKVQKRKKIKVSIPAGVDDGQQIRVSGQGEPGINGGPAGDLYIMFRVQGHNDFERDGDDIYFELKLTFPQAALGDEIEVPTVHGKVKLRIPAGTQSGAQFRLKDKGVKNVHGYGMGNQYVTVKVMTPEKLTEKQKQLLREFAEISGDIPEEQGSSLFDKIKKKFQGE.

The 61-residue stretch at 5-65 (DYYEVLGLTK…QKKARYDQFG (61 aa)) folds into the J domain. Residues 125 to 207 (GKETEIEIPK…CRGEGKVQKR (83 aa)) form a CR-type zinc finger. Zn(2+) contacts are provided by C138, C141, C155, C158, C181, C184, C195, and C198. 4 CXXCXGXG motif repeats span residues 138 to 145 (CETCHGSG), 155 to 162 (CSTCNGAG), 181 to 188 (CTTCHGTG), and 195 to 202 (CSTCRGEG).

This sequence belongs to the DnaJ family. As to quaternary structure, homodimer. Zn(2+) is required as a cofactor.

It localises to the cytoplasm. Functionally, participates actively in the response to hyperosmotic and heat shock by preventing the aggregation of stress-denatured proteins and by disaggregating proteins, also in an autonomous, DnaK-independent fashion. Unfolded proteins bind initially to DnaJ; upon interaction with the DnaJ-bound protein, DnaK hydrolyzes its bound ATP, resulting in the formation of a stable complex. GrpE releases ADP from DnaK; ATP binding to DnaK triggers the release of the substrate protein, thus completing the reaction cycle. Several rounds of ATP-dependent interactions between DnaJ, DnaK and GrpE are required for fully efficient folding. Also involved, together with DnaK and GrpE, in the DNA replication of plasmids through activation of initiation proteins. This Lysinibacillus sphaericus (Bacillus sphaericus) protein is Chaperone protein DnaJ.